A 518-amino-acid polypeptide reads, in one-letter code: RNA-binding protein FUS (518 aa).

Positions methionine 1–tyrosine 14 are enriched in polar residues. Residues methionine 1–threonine 279 form a disordered region. 3 stretches are compositionally biased toward low complexity: residues glutamine 20–glutamine 63, serine 84–proline 105, and glycine 116–proline 126. Residues glutamine 127–glycine 139 show a composition bias toward gly residues. Residues glutamine 140–serine 166 are compositionally biased toward low complexity. 2 stretches are compositionally biased toward gly residues: residues serine 167–tyrosine 178 and serine 186–tyrosine 225. An asymmetric dimethylarginine; alternate mark is found at arginine 217 and arginine 219. Omega-N-methylarginine; alternate occurs at positions 217 and 219. Asymmetric dimethylarginine is present on residues arginine 235, arginine 237, arginine 241, arginine 244, and arginine 252. The span at arginine 237 to arginine 252 shows a compositional bias: gly residues. At serine 270 the chain carries Phosphoserine. Residues asparagine 278–arginine 364 form the RRM domain. Threonine 279 carries the post-translational modification Phosphothreonine. Lysine 327 is covalently cross-linked (Glycyl lysine isopeptide (Lys-Gly) (interchain with G-Cter in SUMO2)). Serine 333 carries the post-translational modification Phosphoserine. Disordered stretches follow at residues phenylalanine 368–glycine 417 and cysteine 437–tyrosine 518. Residues arginine 370, arginine 376, arginine 379, arginine 381, and arginine 387 each carry the asymmetric dimethylarginine modification. Residues arginine 370–glutamine 414 show a composition bias toward gly residues. Arginine 400 carries the post-translational modification Asymmetric dimethylarginine; alternate. An Omega-N-methylarginine; alternate modification is found at arginine 400. The RanBP2-type zinc-finger motif lies at arginine 415 to aspartate 446. Residues glycine 447–tyrosine 461 show a composition bias toward gly residues. The segment covering glycine 462–glycine 485 has biased composition (basic and acidic residues). Arginine 466, arginine 468, arginine 473, arginine 477, arginine 479, arginine 483, arginine 487, and arginine 490 each carry asymmetric dimethylarginine. The span at phenylalanine 486–proline 500 shows a compositional bias: gly residues. Arginine 495 is modified (asymmetric dimethylarginine; alternate). Position 495 is an omega-N-methylarginine; alternate (arginine 495). The span at methionine 503 to tyrosine 518 shows a compositional bias: basic and acidic residues.

It belongs to the RRM TET family. In terms of assembly, self-oligomerizes (via N-terminal region). Oligomerization is essential for chromatin binding. Component of nuclear riboprotein complexes. Interacts with ILF3, TDRD3 and SF1. Interacts through its C-terminus with SFRS13A. Interacts with OTUB1 and SARNP. Interacts with LRSAM1. Interacts with SAFB1 in a DNA-dependent manner; this interaction tethers FUS to chromatin. Interacts with MATR3. Interacts with SNRNP70 and POLR2A; these interactions couple RNA transcription and splicing. Interacts (through its RNA-binding domain) with RALY (through its RNA-binding domain); both are components of the same RNPs. In terms of processing, phosphorylated in its N-terminal serine residues upon induced DNA damage. ATM and DNA-PK are able to phosphorylate FUS N-terminal region.

The protein localises to the nucleus. Its function is as follows. DNA/RNA-binding protein that plays a role in various cellular processes such as transcription regulation, RNA splicing, RNA transport, DNA repair and damage response. Binds to ssRNA containing the consensus sequence 5'-AGGUAA-3'. Binds to nascent pre-mRNAs and acts as a molecular mediator between RNA polymerase II and U1 small nuclear ribonucleoprotein thereby coupling transcription and splicing. Also binds its own pre-mRNA and autoregulates its expression; this autoregulation mechanism is mediated by non-sense-mediated decay. Plays a role in DNA repair mechanisms by promoting D-loop formation and homologous recombination during DNA double-strand break repair. In neuronal cells, plays crucial roles in dendritic spine formation and stability, RNA transport, mRNA stability and synaptic homeostasis. The sequence is that of RNA-binding protein FUS (Fus) from Mus musculus (Mouse).